We begin with the raw amino-acid sequence, 338 residues long: Phenylalanine--tRNA ligase alpha subunit (338 aa).

Residue glutamate 252 participates in Mg(2+) binding.

Belongs to the class-II aminoacyl-tRNA synthetase family. Phe-tRNA synthetase alpha subunit type 1 subfamily. Tetramer of two alpha and two beta subunits. Requires Mg(2+) as cofactor.

The protein resides in the cytoplasm. The catalysed reaction is tRNA(Phe) + L-phenylalanine + ATP = L-phenylalanyl-tRNA(Phe) + AMP + diphosphate + H(+). This Pseudomonas fluorescens (strain Pf0-1) protein is Phenylalanine--tRNA ligase alpha subunit.